The sequence spans 391 residues: Tyrosinase-like protein phomQ2 (391 aa).

The interval 1–21 (MDNVGCEASSSRDPKGKKAVG) is disordered. Residues 61–81 (IRGFICATIIFVVCLGALSYI) form a helical membrane-spanning segment. 2 N-linked (GlcNAc...) asparagine glycosylation sites follow: Asn97 and Asn141. 2 residues coordinate Cu cation: His160 and His169. N-linked (GlcNAc...) asparagine glycosylation is found at Asn204, Asn246, and Asn261. 2 residues coordinate Cu cation: His298 and His324. A glycan (N-linked (GlcNAc...) asparagine) is linked at Asn353.

This sequence belongs to the tyrosinase family. It depends on Cu(2+) as a cofactor.

The protein localises to the membrane. It functions in the pathway mycotoxin biosynthesis. Functionally, tyrosinase-like protein; part of the gene cluster that mediates the biosynthesis of the phomopsins, a group of hexapeptide mycotoxins which infects lupins and causes lupinosis disease in livestock. Within the pathway, phomQ2 is involved in the generation of the common 13-membered macrocycle, possibly by catalyzing the hydroxylation of Tyr. The pathway starts with the processing of the precursor phomA by several endopeptidases including kexin proteases as well as the cluster-specific S41 family peptidase phomP1 and the oligopeptidase phomG to produce 10 identical copies of the hexapeptide Tyr-Val-Ile-Pro-Ile-Asp. After being excised from the precursor peptide, the core peptides are cyclized and modified post-translationally by enzymes encoded within the gene cluster. The timing and order of proteolysis of the phomA precursor and PTMs are still unknown. Two tyrosinase-like enzymes, phomQ1 and phomQ2, catalyze the chlorination and hydroxylation of Tyr, respectively. PhomYb, is proposed to be involved in the construction of the macrocyclic structure. The other 4 ustYa family proteins may be involved in PTMs that generate the unique structure of phomopsin A. PhomYa is required for the hydroxylation of C-beta of Tyr. PhomYc, phomYd, and phomYe are responsible for the biosynthesis of 2,3-dehydroisoleucine (dIle), 2,3-dehydroaspartic acid (dAsp), and 3,4-dehydroproline (dPro), respectively. While dIle formation by phomYc is indispensable for the installation of dAsp by phomYd, the order of the other PTMs have not been elucidated yet. Most of the biosynthetic enzymes likely have broad substrate specificity, and thus, there might be a metabolic grid from a precursor to phomopsin A. The enzyme(s) responsible for the biosynthesis of 3,4-dehydrovaline (dVal) have also not been identified yet. Finally, phomM acts as an S-adenosylmethionine-dependent alpha-N-methyltransferase that catalyzes two successive N-methylation reactions, converting N-desmethyl-phomopsin A to phomopsin A and phomopsin A further to an N,N-dimethylated congener called phomopsin E. The polypeptide is Tyrosinase-like protein phomQ2 (Diaporthe leptostromiformis (Lupinosis disease fungus)).